We begin with the raw amino-acid sequence, 193 residues long: uncharacterized protein (193 aa).

Disordered regions lie at residues 1 to 21 (MPKGRRGSQSPTMSQRPAPPL), 53 to 96 (GAPA…PWPS), and 114 to 136 (SGPEAAASPLAPGPMTSRLASAS). Positions 53–70 (GAPAGGAPAAGGRSLPQG) are enriched in low complexity. Over residues 71 to 95 (PSAPAPPPPPGLGPPSERPCPPPWP) the composition is skewed to pro residues. Over residues 116-127 (PEAAASPLAPGP) the composition is skewed to low complexity.

This is an uncharacterized protein from Bos taurus (Bovine).